Reading from the N-terminus, the 410-residue chain is Protein ea47 (410 aa).

This chain is Protein ea47 (ea47), found in Escherichia coli (Bacteriophage lambda).